A 560-amino-acid chain; its full sequence is Probable sulfate transporter MT1781 (560 aa).

Transmembrane regions (helical) follow at residues V29–V49, G51–L71, I79–G99, A105–A125, V138–I158, W184–A204, A207–D227, A256–A276, L333–F353, I355–F375, and A394–L414. Residues D442–F557 enclose the STAS domain.

This sequence belongs to the SLC26A/SulP transporter (TC 2.A.53) family.

The protein resides in the cell membrane. This chain is Probable sulfate transporter MT1781, found in Mycobacterium tuberculosis (strain CDC 1551 / Oshkosh).